A 1132-amino-acid chain; its full sequence is MAAGKSGGSAGALFLKALDRSESKRDGGFKNNWSFDHEEESEGDADKDGANLLSVEDEDSEISKGKKLNRRSEIVATSSGDFILKTYVRRSKTDGFKTLKGNPIGLNMLSNNKKLSESTAGTALCSGTVVHGRRFHHAHSQTPGIRTAAQRKEYPPYVHKAENSPVMLSHGQGGDHIMKKTEESESYVESEIKRKVQQKRHCSTYQLSPLSPASKKCLTHLEVSEQREYCPKCGKEKENQTKCQSCGIVFHNDLQRNCRQAVTLNEPTGPLLRTSIHQNSGGQKSQNTGLTAKKFYGNSVDKIPIDILVTCDDSRHNYIQTNGKVILPGGKIPKLTNPKERKISVSDLNDPIILSSDDDDDDDDRTKRRESTSPKPADSACSSPVPSTGKVEAALNADACRAEQEPRSSPAEPELNTIVIPRKARMKDQLGNSISTPLKRRKVNSHAAFIHPMSLSCQNFESVILNCRSIRVGTLFRLLVEPVIFSLESITIHLDGPESDPVDIILNTSDLTKCEWCNVRKLPVVFLQAIPAVYQKLSMQLQMSKEDKVWNDCKGINRITSLEEQYIILIFQTGLDHQAEVVFESIITDIGIRNNVPNFFAKILFDEANSRLVACTRSYEESIKGNCAQKENKVKTVSFESKIQLRSKQELQFFDDDEEAGESHTIFIGPVEKLIVYPPPPAKGGISVTNEDLHCLSEGEFLNDVIIDFYLKYLVLEKLKKEDADRIHIFSSFFYKRLNQRERRNPETTNLSIQQKRHGRVKTWTRHVDIFEKDFIFVPLNEAAHWFLAVVCFPGLEKPKYEPNPHYHENAVMQKTPSAEDSCVSSASEMGACSQNSAAKPVIKKMLNRKHCLAVTDSSAAQEESEPCYRRNAYSVKCSMKKKNHAINENEEPSNGESTCQDICDRTQSENGLRDECFSSVHHPDALSKIRLNYGDQSADGGKLLEDELIDFSEDQDDPDDSSDDGLLADENYSSEIGQWHLKPTVCKQPCILLMDSLRGPSRSNVVKILREYLEVEWEVKKGSKRSFSKDVMKGSNPKVPQQNNFSDCGVYVLQYVESFFENPVLNFELPMNLMNWFPPPRMKTKREEIRNIILKLQESQSKDKKLLKDSLAETSLGDGAEQYASASGGSE.

Disordered regions lie at residues 23–51 and 327–388; these read SKRD…DGAN and LPGG…VPST. Phosphoserine is present on residues serine 41, serine 355, serine 356, serine 371, and serine 373. The residue at position 436 (threonine 436) is a Phosphothreonine. Residue lysine 648 forms a Glycyl lysine isopeptide (Lys-Gly) (interchain with G-Cter in SUMO2) linkage. Residues 686–1132 form a protease region; sequence ISVTNEDLHC…QYASASGGSE (447 aa). Catalysis depends on residues histidine 785 and aspartate 936. Position 938 is a phosphoserine (serine 938). Residue cysteine 1049 is part of the active site. Residue serine 1131 is modified to Phosphoserine.

Belongs to the peptidase C48 family. Interacts with RXRA. Forms a complex with KAT5-TIP60 and UBE2I in response to UV irradiation. Interacts with RPA1 to maintain it in hyposumoylated state during S phase preventing DNA repair initiation.

The protein resides in the nucleus. The protein operates within protein modification; protein sumoylation. Protease that deconjugates SUMO1, SUMO2 and SUMO3 from targeted proteins. Processes preferentially poly-SUMO2 and poly-SUMO3 chains, but does not efficiently process SUMO1, SUMO2 and SUMO3 precursors. Deconjugates SUMO1 from RXRA, leading to transcriptional activation. Involved in chromosome alignment and spindle assembly, by regulating the kinetochore CENPH-CENPI-CENPK complex. Desumoylates PML and CENPI, protecting them from degradation by the ubiquitin ligase RNF4, which targets polysumoylated proteins for proteasomal degradation. Also desumoylates RPA1, thus preventing recruitment of RAD51 to the DNA damage foci to initiate DNA repair through homologous recombination. The polypeptide is Sentrin-specific protease 6 (Senp6) (Mus musculus (Mouse)).